Here is a 956-residue protein sequence, read N- to C-terminus: Probable hypoxanthine oxidase XdhD (956 aa).

Mo-molybdopterin is bound by residues Q414, F445, and A727.

Belongs to the xanthine dehydrogenase family. [2Fe-2S] cluster serves as cofactor. The cofactor is Mo-molybdopterin.

In terms of biological role, probably has no xanthine dehydrogenase activity; however deletion results in increased adenine sensitivity, suggesting that this protein contributes to the conversion of adenine to guanine nucleotides during purine salvage. The protein is Probable hypoxanthine oxidase XdhD (xdhD) of Escherichia coli (strain K12).